The sequence spans 825 residues: Putative pentatricopeptide repeat-containing protein At2g01510 (825 aa).

PPR repeat units lie at residues 47–77, 78–108, 109–143, 146–180, 183–213, 214–248, 249–283, 284–314, 315–349, 350–384, 385–415, 416–450, 451–485, 486–516, 517–551, 552–587, and 588–618; these read DTCR…MPHK, NTVS…MPDR, TVVT…SSCT, DHVT…GFDT, FLTV…IPEK, DSVT…GHQP, SDFT…GFSR, DASV…MPEL, DFVS…GFDR, RNFP…TADS, ILHV…LPQR, TTVS…NLRA, DQST…GNLE, NVFS…MPDR, NAVS…GLQP, DSVS…GITP, and KKKH…MPFE. The segment at 623-699 is type E motif; the sequence is MWSSVLNACR…VPAYSWVEVN (77 aa). The tract at residues 700–730 is type E(+) motif; it reads HKIHVFSSNDQTHPNGDEIVRKINELTAEIE. Residues 731 to 825 form a type DYW motif region; it reads REGYKPDTSS…EGVCSCGDYW (95 aa).

Belongs to the PPR family. PCMP-H subfamily.

The sequence is that of Putative pentatricopeptide repeat-containing protein At2g01510 (PCMP-H36) from Arabidopsis thaliana (Mouse-ear cress).